Reading from the N-terminus, the 126-residue chain is MADEIAKAQVARPGGDTIFGKIIRKEIPAKIIFEDDQCLAFHDISPQAPTHFLVIPKKHISQISAAEDADESLLGHLMIVGKKCAADLGLKKGYRMVVNEGSDGGQSVYHVHLHVLGGRQMNWPPG.

An N-acetylalanine modification is found at Ala-2. Positions 18–126 (IFGKIIRKEI…GGRQMNWPPG (109 aa)) constitute an HIT domain. Lys-21 and Lys-30 each carry N6-acetyllysine. 43-44 (DI) lines the AMP pocket. 2 positions are modified to phosphoserine: Ser-45 and Ser-72. AMP is bound by residues Asn-99, 105 to 107 (GQS), and 112 to 114 (HLH). Residues 110–114 (HVHLH) carry the Histidine triad motif motif. Catalysis depends on His-112, which acts as the Tele-AMP-histidine intermediate.

It belongs to the HINT family. As to quaternary structure, homodimer. Interacts with CDK7. Interacts with RUVBL1 and RUVBL2 and is associated with the LEF1/TCF1-CTNNB1 complex and with a KAT5 histone acetyltransferase complex. Identified in a complex with MITF and CTNNB1. Interacts with CDC34 and RBX1, and is part of a SCF (SKP2-CUL1-F-box protein) E3 ubiquitin-protein ligase complex. Interacts with SUMO1, SUMO2 and RGS17. Interacts with the Ten-1 ICD form of TENM1. Interacts with CALM1; interaction increases in the presence of calcium ions. In terms of tissue distribution, widely expressed.

It localises to the cytoplasm. The protein resides in the nucleus. It catalyses the reaction adenosine 5'-phosphoramidate + H2O = AMP + NH4(+). Functionally, exhibits adenosine 5'-monophosphoramidase activity, hydrolyzing purine nucleotide phosphoramidates with a single phosphate group such as adenosine 5'monophosphoramidate (AMP-NH2) to yield AMP and NH2. Hydrolyzes adenosine 5'monophosphomorpholidate (AMP-morpholidate) and guanosine 5'monophosphomorpholidate (GMP-morpholidate). Hydrolyzes lysyl-AMP (AMP-N-epsilon-(N-alpha-acetyl lysine methyl ester)) generated by lysine tRNA ligase. Hydrolyzes Met-AMP, His-AMP, Asp-AMP, lysyl-GMP (GMP-N-epsilon-(N-alpha-acetyl lysine methyl ester)) and AMP-N-alanine methyl ester. Can also convert adenosine 5'-O-phosphorothioate and guanosine 5'-O-phosphorothioate to the corresponding nucleoside 5'-O-phosphates with concomitant release of hydrogen sulfide. In addition, functions as a scaffolding protein that modulates transcriptional activation by the LEF1/TCF1-CTNNB1 complex and by the complex formed with MITF and CTNNB1. Modulates p53/TP53 levels and p53/TP53-mediated apoptosis. Modulates proteasomal degradation of target proteins by the SCF (SKP2-CUL1-F-box protein) E3 ubiquitin-protein ligase complex. Also exhibits SUMO-specific isopeptidase activity, deconjugating SUMO1 from RANGAP1 and RGS17. The protein is Adenosine 5'-monophosphoramidase HINT1 (HINT1) of Oryctolagus cuniculus (Rabbit).